The sequence spans 788 residues: MVRTKNQSSSSSASSSSHKSPIKSHGGSGSAAAGTAGHPVSRSSSSHRTSIDDRKSATNVSSSSNRRTTPGSSPDGDGDDDTTTTDDLTPTSTSAPRSAGGPSSVHKQNLYVVSFPIIFLFNVLRSLIYQLFCIFRYLYGASTKVIYRPHRRDCNIEIVVQNNSNNKDQKHQQLTSSQSLNYPLEVTSGEAASEQQVQQPLPQQRYRALQPLEMAGANRSGSGYSPGPGDPLLAKQKHHHRRAFEYISKALKIDEENEGHKELAIELYRKGIKELEDGIAVDCWSGRGDVWDRAQRLHDKMQTNLSMARDRLHFLALREEDFQMHRLSLKEKQKANESREQQQKPQKAREAADKPMLTNLTNDPAKLKTRSSGYGPKNGLTTPRIFATATTPTSSSSLASGRKLTIGTKRPGNLAVAANKSQTLPRNLGSKTSVGAVRQPGKTAATPPAVRRQFSSGRNTPPQRSRTPINNNGASGSGSGASTPVVTVKGVEQKLVQLILDEIVEGGAKVEWTDIAGQEVAKQALQEMVILPSVRPELFTGLRAPAKGLLLFGPPGNGKTLLARAVATECSATFLNISAASLTSKYVGDGEKLVRALFAVARHLQPSIIFIDEVDSLLSERSSGEHEASRRLKTEFLVEFDGLPGNPDGDRIVVLAATNRPQELDEAALRRFTKRVYVSLPDEQTRELLLNRLLQKQGSPLDTDALRRLSKITDGYSGSDLTALAKDAALEPIRELNVEQVKCLDINAMRHITEKDFHNSLKRIRRSVAPQSLSLYEKWSSDYGDITI.

The segment at 1-105 is disordered; sequence MVRTKNQSSS…PRSAGGPSSV (105 aa). Over 1–116 the chain is Cytoplasmic; that stretch reads MVRTKNQSSS…KQNLYVVSFP (116 aa). The interval 1–227 is required for localization to punctate cytoplasmic foci; it reads MVRTKNQSSS…NRSGSGYSPG (227 aa). Low complexity-rich tracts occupy residues 8 to 48 and 57 to 75; these read SSSS…SSHR and ATNV…SSPD. Positions 117–137 form an intramembrane region, helical; the sequence is IIFLFNVLRSLIYQLFCIFRY. The Cytoplasmic portion of the chain corresponds to 138–788; it reads LYGASTKVIY…WSSDYGDITI (651 aa). A sufficient for interaction with microtubules and microtubule severing region spans residues 227–788; sequence GPGDPLLAKQ…WSSDYGDITI (562 aa). One can recognise an MIT domain in the interval 240-315; that stretch reads HRRAFEYISK…SMARDRLHFL (76 aa). Basic and acidic residues predominate over residues 331–353; that stretch reads EKQKANESREQQQKPQKAREAAD. Residues 331–484 are disordered; it reads EKQKANESRE…SGSGSGASTP (154 aa). The span at 387-400 shows a compositional bias: low complexity; the sequence is ATATTPTSSSSLAS. 2 stretches are compositionally biased toward polar residues: residues 419-433 and 453-469; these read NKSQ…SKTS and QFSS…RTPI. Residues 471-485 form a required for interaction with microtubules region; the sequence is NNGASGSGSGASTPV. 553–560 is a binding site for ATP; that stretch reads GPPGNGKT.

This sequence belongs to the AAA ATPase family. Spastin subfamily. In terms of assembly, homohexamer. The homohexamer is stabilized by ATP-binding. The homohexamer may adopt a ring conformation through which microtubules pass prior to being severed. Interacts with microtubules. Interacts with atl; may be involved in microtubule dynamics.

The protein resides in the membrane. It localises to the cytoplasm. Its subcellular location is the cytoskeleton. The protein localises to the microtubule organizing center. It is found in the centrosome. The protein resides in the chromosome. It localises to the lipid droplet. It catalyses the reaction n ATP + n H2O + a microtubule = n ADP + n phosphate + (n+1) alpha/beta tubulin heterodimers.. ATP-dependent microtubule severing protein. Stimulates microtubule minus-end depolymerization and poleward microtubule flux in the mitotic spindle. Regulates microtubule stability in the neuromuscular junction synapse. Involved in lipid metabolism by regulating the size and distribution of lipid droplets. Involved in axon regeneration by regulating microtubule severing. In Drosophila persimilis (Fruit fly), this protein is Spastin.